A 157-amino-acid chain; its full sequence is Protein Smg homolog (157 aa).

Belongs to the Smg family.

The polypeptide is Protein Smg homolog (Tolumonas auensis (strain DSM 9187 / NBRC 110442 / TA 4)).